We begin with the raw amino-acid sequence, 185 residues long: MEDKPLGILRVHVKRGINLAIRDATTSDPYVVITLANQKLKTRVINNNCNPVWNEQLTLSIKDVNDPIRLTVFDKDRFSGDDKMGDAEIDFRPFLEAHQMELDFQKLPNGCAIKRIRPGRTNCLAEESSITWSNGKIMQEMILRLKNVECGEVELMLEWTDGPGCKGLGREGSKKTPWMPTKRLD.

Residues 1-104 enclose the C2 domain; it reads MEDKPLGILR…LEAHQMELDF (104 aa). 7 residues coordinate Ca(2+): Arg22, Asp23, Asp28, Asp74, Lys75, Asp76, and Asp82.

The protein belongs to the plant CAR protein family. In terms of assembly, binds to PYR/PYL/RCAR abscisic acid intracellular receptors in an ABA-independent manner, both at the plasma membrane and in the nucleus. Interacts with LOT1 in the nuleus; this interaction is repressed by abscisic acid (ABA) and is sensitive to calcium ion Ca(2+), leading to free CAR9 accumulation at the plasma membrane. Ca(2+) serves as cofactor.

It localises to the cell membrane. The protein localises to the nucleus. In terms of biological role, stimulates the GTPase/ATPase activities of Obg-like ATPases. Mediates the transient calcium-dependent interaction of PYR/PYL/RCAR abscisic acid (ABA) receptors with the plasma membrane and thus regulates ABA sensitivity. The polypeptide is Protein C2-DOMAIN ABA-RELATED 9 (Arabidopsis thaliana (Mouse-ear cress)).